The chain runs to 291 residues: uncharacterized protein (291 aa).

2 consecutive transmembrane segments (helical) span residues 42–62 (IFFFLILILVFVLWILVRALW) and 86–106 (TIFPCFISIFIVEPSFALALD).

This sequence belongs to the cytochrome c oxidase subunit 2 family.

It localises to the mitochondrion membrane. This is an uncharacterized protein from Arabidopsis thaliana (Mouse-ear cress).